Consider the following 431-residue polypeptide: Histidinol dehydrogenase (431 aa).

Tyrosine 127, glutamine 189, and asparagine 212 together coordinate NAD(+). Substrate-binding residues include serine 237, glutamine 259, and histidine 262. Positions 259 and 262 each coordinate Zn(2+). Active-site proton acceptor residues include glutamate 326 and histidine 327. The substrate site is built by histidine 327, aspartate 360, glutamate 414, and histidine 419. Aspartate 360 is a Zn(2+) binding site. Residue histidine 419 participates in Zn(2+) binding.

Belongs to the histidinol dehydrogenase family. It depends on Zn(2+) as a cofactor.

It catalyses the reaction L-histidinol + 2 NAD(+) + H2O = L-histidine + 2 NADH + 3 H(+). The protein operates within amino-acid biosynthesis; L-histidine biosynthesis; L-histidine from 5-phospho-alpha-D-ribose 1-diphosphate: step 9/9. In terms of biological role, catalyzes the sequential NAD-dependent oxidations of L-histidinol to L-histidinaldehyde and then to L-histidine. In Xanthomonas campestris pv. campestris (strain 8004), this protein is Histidinol dehydrogenase.